A 168-amino-acid polypeptide reads, in one-letter code: RxLR effector protein CRE8 (168 aa).

The signal sequence occupies residues methionine 1–alanine 23. A RxLR-dEER motif is present at residues arginine 54 to arginine 69.

Belongs to the RxLR effector family.

The protein localises to the secreted. It is found in the host cell. Its function is as follows. Effector that is involved in host plant infection. Contributes to virulence during the early infection stage, by inhibiting plant defense responses induced by both PAMP-triggered immunity (PTI) and effector-triggered immunity (ETI). The protein is RxLR effector protein CRE8 of Phytophthora infestans (strain T30-4) (Potato late blight agent).